The sequence spans 114 residues: Large ribosomal subunit protein bL19 (114 aa).

The protein belongs to the bacterial ribosomal protein bL19 family.

This protein is located at the 30S-50S ribosomal subunit interface and may play a role in the structure and function of the aminoacyl-tRNA binding site. The polypeptide is Large ribosomal subunit protein bL19 (Acidithiobacillus ferrooxidans (strain ATCC 23270 / DSM 14882 / CIP 104768 / NCIMB 8455) (Ferrobacillus ferrooxidans (strain ATCC 23270))).